We begin with the raw amino-acid sequence, 425 residues long: Protein CLP1 homolog (425 aa).

Residues Glu-18, Lys-59, and 121-126 (DVGKST) contribute to the ATP site.

It belongs to the Clp1 family. Clp1 subfamily.

Its subcellular location is the nucleus. In terms of biological role, required for endonucleolytic cleavage during polyadenylation-dependent pre-mRNA 3'-end formation. In Drosophila pseudoobscura pseudoobscura (Fruit fly), this protein is Protein CLP1 homolog (cbc).